The sequence spans 197 residues: Holliday junction branch migration complex subunit RuvA (197 aa).

The domain I stretch occupies residues 1 to 64 (MIASVRGTLI…EDALTLYGFK (64 aa)). The domain II stretch occupies residues 65 to 145 (TVEQRQLFET…GLPVAPGVSP (81 aa)). The interval 146 to 153 (AVAAVNAE) is flexible linker. The tract at residues 153–197 (ELSEMLVSLGFSSAEASTAIAALPPDAPLDLEERLRLALRYFGAR) is domain III.

This sequence belongs to the RuvA family. Homotetramer. Forms an RuvA(8)-RuvB(12)-Holliday junction (HJ) complex. HJ DNA is sandwiched between 2 RuvA tetramers; dsDNA enters through RuvA and exits via RuvB. An RuvB hexamer assembles on each DNA strand where it exits the tetramer. Each RuvB hexamer is contacted by two RuvA subunits (via domain III) on 2 adjacent RuvB subunits; this complex drives branch migration. In the full resolvosome a probable DNA-RuvA(4)-RuvB(12)-RuvC(2) complex forms which resolves the HJ.

It localises to the cytoplasm. In terms of biological role, the RuvA-RuvB-RuvC complex processes Holliday junction (HJ) DNA during genetic recombination and DNA repair, while the RuvA-RuvB complex plays an important role in the rescue of blocked DNA replication forks via replication fork reversal (RFR). RuvA specifically binds to HJ cruciform DNA, conferring on it an open structure. The RuvB hexamer acts as an ATP-dependent pump, pulling dsDNA into and through the RuvAB complex. HJ branch migration allows RuvC to scan DNA until it finds its consensus sequence, where it cleaves and resolves the cruciform DNA. This chain is Holliday junction branch migration complex subunit RuvA, found in Roseiflexus castenholzii (strain DSM 13941 / HLO8).